Here is a 504-residue protein sequence, read N- to C-terminus: Protein psiD (504 aa).

Positions 1–21 (MKYSYLLLILLLSNLYKEGFS) are cleaved as a signal peptide. N-linked (GlcNAc...) asparagine glycosylation is found at Asn87, Asn136, Asn236, Asn252, Asn290, and Asn373. The PA14 domain occupies 111–251 (LTRVGDSTYA…YDACGVCDGH (141 aa)). The segment covering 417-430 (TVTPTVTPTVTPTP) has biased composition (low complexity). A disordered region spans residues 417 to 453 (TVTPTVTPTVTPTPTTTPTPSPTTVPPRPTPTPLPAD). A compositionally biased stretch (pro residues) spans 431 to 453 (TTTPTPSPTTVPPRPTPTPLPAD). Asn483 carries N-linked (GlcNAc...) asparagine glycosylation.

It belongs to the prespore-cell-inducing factor family.

The protein localises to the secreted. This is Protein psiD (psiD) from Dictyostelium discoideum (Social amoeba).